We begin with the raw amino-acid sequence, 257 residues long: NAD-capped RNA hydrolase NudC (257 aa).

Arg69 serves as a coordination point for substrate. Zn(2+)-binding residues include Cys98 and Cys101. Glu111 is a binding site for substrate. Zn(2+) is bound by residues Cys116 and Cys119. Substrate is bound at residue Tyr124. Positions 125–248 constitute a Nudix hydrolase domain; that stretch reads PQIAPCIIVA…TVARRLIEDT (124 aa). The a divalent metal cation site is built by Ala158, Glu174, and Glu178. A Nudix box motif is present at residues 159–180; the sequence is GFVEVGETLEQAVAREVMEESG. Position 192 to 199 (192 to 199) interacts with substrate; the sequence is QPWPFPQS. Glu219 provides a ligand contact to a divalent metal cation. Ala241 is a binding site for substrate.

It belongs to the Nudix hydrolase family. NudC subfamily. As to quaternary structure, homodimer. Mg(2+) is required as a cofactor. It depends on Mn(2+) as a cofactor. Zn(2+) serves as cofactor.

The enzyme catalyses a 5'-end NAD(+)-phospho-ribonucleoside in mRNA + H2O = a 5'-end phospho-adenosine-phospho-ribonucleoside in mRNA + beta-nicotinamide D-ribonucleotide + 2 H(+). The catalysed reaction is NAD(+) + H2O = beta-nicotinamide D-ribonucleotide + AMP + 2 H(+). It carries out the reaction NADH + H2O = reduced beta-nicotinamide D-ribonucleotide + AMP + 2 H(+). Its function is as follows. mRNA decapping enzyme that specifically removes the nicotinamide adenine dinucleotide (NAD) cap from a subset of mRNAs by hydrolyzing the diphosphate linkage to produce nicotinamide mononucleotide (NMN) and 5' monophosphate mRNA. The NAD-cap is present at the 5'-end of some mRNAs and stabilizes RNA against 5'-processing. Has preference for mRNAs with a 5'-end purine. Catalyzes the hydrolysis of a broad range of dinucleotide pyrophosphates. This chain is NAD-capped RNA hydrolase NudC, found in Salmonella choleraesuis (strain SC-B67).